The chain runs to 718 residues: Ribosomal RNA large subunit methyltransferase K/L (718 aa).

Positions 43-154 (TQYRILLWSR…QDELVVSLDL (112 aa)) constitute a THUMP domain.

Belongs to the methyltransferase superfamily. RlmKL family.

The protein localises to the cytoplasm. It carries out the reaction guanosine(2445) in 23S rRNA + S-adenosyl-L-methionine = N(2)-methylguanosine(2445) in 23S rRNA + S-adenosyl-L-homocysteine + H(+). The enzyme catalyses guanosine(2069) in 23S rRNA + S-adenosyl-L-methionine = N(2)-methylguanosine(2069) in 23S rRNA + S-adenosyl-L-homocysteine + H(+). Specifically methylates the guanine in position 2445 (m2G2445) and the guanine in position 2069 (m7G2069) of 23S rRNA. This is Ribosomal RNA large subunit methyltransferase K/L from Histophilus somni (strain 2336) (Haemophilus somnus).